A 442-amino-acid polypeptide reads, in one-letter code: Putative neutral sphingomyelinase (442 aa).

Glu46 lines the Mg(2+) pocket. The active-site Proton acceptor is the His264. The tract at residues 309 to 330 is disordered; it reads ALTGEDDQSSQHQPEIQCNGSS. Residues 318 to 330 are compositionally biased toward polar residues; sequence SQHQPEIQCNGSS. Helical transmembrane passes span 362–384 and 391–413; these read RILYYSAATFLFVLLVLLVEFTA and IFLLLKFIVFGVILFCVFMASIW.

This sequence belongs to the neutral sphingomyelinase family.

The protein resides in the membrane. The catalysed reaction is a sphingomyelin + H2O = phosphocholine + an N-acylsphing-4-enine + H(+). Its pathway is lipid metabolism; sphingolipid metabolism. The sequence is that of Putative neutral sphingomyelinase from Drosophila melanogaster (Fruit fly).